Consider the following 149-residue polypeptide: Large ribosomal subunit protein bL9 (149 aa).

This sequence belongs to the bacterial ribosomal protein bL9 family.

In terms of biological role, binds to the 23S rRNA. In Desulforamulus reducens (strain ATCC BAA-1160 / DSM 100696 / MI-1) (Desulfotomaculum reducens), this protein is Large ribosomal subunit protein bL9.